A 95-amino-acid chain; its full sequence is Putative RelE-like toxin protein (95 aa).

Belongs to the RelE toxin family.

Toxic component of a type II toxin-antitoxin (TA) system. The chain is Putative RelE-like toxin protein from Escherichia coli.